Reading from the N-terminus, the 196-residue chain is ATP-dependent Clp protease proteolytic subunit (196 aa).

Serine 99 acts as the Nucleophile in catalysis. The active site involves histidine 124.

Belongs to the peptidase S14 family. As to quaternary structure, fourteen ClpP subunits assemble into 2 heptameric rings which stack back to back to give a disk-like structure with a central cavity, resembling the structure of eukaryotic proteasomes.

The protein localises to the cytoplasm. It carries out the reaction Hydrolysis of proteins to small peptides in the presence of ATP and magnesium. alpha-casein is the usual test substrate. In the absence of ATP, only oligopeptides shorter than five residues are hydrolyzed (such as succinyl-Leu-Tyr-|-NHMec, and Leu-Tyr-Leu-|-Tyr-Trp, in which cleavage of the -Tyr-|-Leu- and -Tyr-|-Trp bonds also occurs).. Cleaves peptides in various proteins in a process that requires ATP hydrolysis. Has a chymotrypsin-like activity. Plays a major role in the degradation of misfolded proteins. The chain is ATP-dependent Clp protease proteolytic subunit from Nitratiruptor sp. (strain SB155-2).